A 210-amino-acid chain; its full sequence is Ribosomal RNA large subunit methyltransferase E (210 aa).

Residues Gly64, Trp66, Asp84, Asn100, and Asp125 each contribute to the S-adenosyl-L-methionine site. The Proton acceptor role is filled by Lys165.

Belongs to the class I-like SAM-binding methyltransferase superfamily. RNA methyltransferase RlmE family.

It is found in the cytoplasm. The enzyme catalyses uridine(2552) in 23S rRNA + S-adenosyl-L-methionine = 2'-O-methyluridine(2552) in 23S rRNA + S-adenosyl-L-homocysteine + H(+). Its function is as follows. Specifically methylates the uridine in position 2552 of 23S rRNA at the 2'-O position of the ribose in the fully assembled 50S ribosomal subunit. This is Ribosomal RNA large subunit methyltransferase E from Buchnera aphidicola subsp. Baizongia pistaciae (strain Bp).